Consider the following 280-residue polypeptide: Pantothenate synthetase (280 aa).

Residue methionine 30–histidine 37 participates in ATP binding. Histidine 37 (proton donor) is an active-site residue. Glutamine 61 serves as a coordination point for (R)-pantoate. Position 61 (glutamine 61) interacts with beta-alanine. ATP is bound at residue glycine 147–aspartate 150. Residue glutamine 153 participates in (R)-pantoate binding. Residues valine 176 and methionine 184 to arginine 187 contribute to the ATP site.

This sequence belongs to the pantothenate synthetase family. In terms of assembly, homodimer.

It is found in the cytoplasm. It catalyses the reaction (R)-pantoate + beta-alanine + ATP = (R)-pantothenate + AMP + diphosphate + H(+). Its pathway is cofactor biosynthesis; (R)-pantothenate biosynthesis; (R)-pantothenate from (R)-pantoate and beta-alanine: step 1/1. In terms of biological role, catalyzes the condensation of pantoate with beta-alanine in an ATP-dependent reaction via a pantoyl-adenylate intermediate. The chain is Pantothenate synthetase from Sulfurihydrogenibium sp. (strain YO3AOP1).